A 302-amino-acid polypeptide reads, in one-letter code: Protein MGF 110-11L (302 aa).

A helical transmembrane segment spans residues Pro-26–Ala-46. Residue Asn-97 is glycosylated (N-linked (GlcNAc...) asparagine; by host). Transmembrane regions (helical) follow at residues Leu-154 to Val-174 and Leu-183 to Val-203. A glycan (N-linked (GlcNAc...) asparagine; by host) is linked at Asn-294.

The protein belongs to the asfivirus MGF 110 family.

The protein resides in the host membrane. Functionally, plays a role in virus cell tropism, and may be required for efficient virus replication in macrophages. The sequence is that of Protein MGF 110-11L from African swine fever virus (isolate Tick/South Africa/Pretoriuskop Pr4/1996) (ASFV).